Here is a 158-residue protein sequence, read N- to C-terminus: ATP synthase subunit b', chloroplastic (158 aa).

A helical membrane pass occupies residues 25-45; it reads ATLPLMALQFIILTTILNFIF.

Belongs to the ATPase B chain family. F-type ATPases have 2 components, F(1) - the catalytic core - and F(0) - the membrane proton channel. F(1) has five subunits: alpha(3), beta(3), gamma(1), delta(1), epsilon(1). F(0) has four main subunits: a(1), b(1), b'(1) and c(10-14). The alpha and beta chains form an alternating ring which encloses part of the gamma chain. F(1) is attached to F(0) by a central stalk formed by the gamma and epsilon chains, while a peripheral stalk is formed by the delta, b and b' chains.

The protein resides in the plastid. It localises to the chloroplast thylakoid membrane. Functionally, f(1)F(0) ATP synthase produces ATP from ADP in the presence of a proton or sodium gradient. F-type ATPases consist of two structural domains, F(1) containing the extramembraneous catalytic core and F(0) containing the membrane proton channel, linked together by a central stalk and a peripheral stalk. During catalysis, ATP synthesis in the catalytic domain of F(1) is coupled via a rotary mechanism of the central stalk subunits to proton translocation. In terms of biological role, component of the F(0) channel, it forms part of the peripheral stalk, linking F(1) to F(0). The b'-subunit is a diverged and duplicated form of b found in plants and photosynthetic bacteria. The sequence is that of ATP synthase subunit b', chloroplastic from Gracilaria tenuistipitata var. liui (Red alga).